We begin with the raw amino-acid sequence, 381 residues long: 4-hydroxy-3-methylbut-2-en-1-yl diphosphate synthase (flavodoxin) (381 aa).

The [4Fe-4S] cluster site is built by cysteine 280, cysteine 283, cysteine 315, and glutamate 322.

The protein belongs to the IspG family. Requires [4Fe-4S] cluster as cofactor.

The catalysed reaction is (2E)-4-hydroxy-3-methylbut-2-enyl diphosphate + oxidized [flavodoxin] + H2O + 2 H(+) = 2-C-methyl-D-erythritol 2,4-cyclic diphosphate + reduced [flavodoxin]. Its pathway is isoprenoid biosynthesis; isopentenyl diphosphate biosynthesis via DXP pathway; isopentenyl diphosphate from 1-deoxy-D-xylulose 5-phosphate: step 5/6. Functionally, converts 2C-methyl-D-erythritol 2,4-cyclodiphosphate (ME-2,4cPP) into 1-hydroxy-2-methyl-2-(E)-butenyl 4-diphosphate. This chain is 4-hydroxy-3-methylbut-2-en-1-yl diphosphate synthase (flavodoxin), found in Clavibacter sepedonicus (Clavibacter michiganensis subsp. sepedonicus).